We begin with the raw amino-acid sequence, 433 residues long: MTRYLVRPGSRLAGRFPVPGDKSISHRAVILGALAEGVTEVEGLLEGADVLATIAAFRSMGVQMEGPDKGHLRIHGAGLQGLRAPVVPLDCGNSGTAMRLLAGVLAGQPFPSTLVGDASLQKRPMGRILNPLRAMGAEIAAQDGRAPLHIHGRPLHGIDYALPVASAQVKSAVLLAGLYADGQTCVTEPAPTRDHSERMLQGFGQPVERHGPRACLRGGGRLCGQALQVPGDISSAAFFLLGATIAPGSDLTLEGVGINPTRTGIIEILTRMGARIDLTALREVGGEPVADIRVRYAPLQGIAIPPRLVPLAIDEFPALFIAAACAKGQTVITGAEELRVKESDRIAVMAGGLRALGATVEERVDGAIISGSALLGGRVDSHGDHRIAMAFAMAALVAQGDMEILDCANVATSFPSFPALAQQAGLLLEVASA.

3-phosphoshikimate contacts are provided by K22, S23, and R27. Residue K22 coordinates phosphoenolpyruvate. The phosphoenolpyruvate site is built by G95 and R123. Positions 166, 168, 314, and 341 each coordinate 3-phosphoshikimate. Phosphoenolpyruvate is bound at residue Q168. D314 functions as the Proton acceptor in the catalytic mechanism. Residues R345 and R386 each contribute to the phosphoenolpyruvate site.

It belongs to the EPSP synthase family. In terms of assembly, monomer.

Its subcellular location is the cytoplasm. It catalyses the reaction 3-phosphoshikimate + phosphoenolpyruvate = 5-O-(1-carboxyvinyl)-3-phosphoshikimate + phosphate. It participates in metabolic intermediate biosynthesis; chorismate biosynthesis; chorismate from D-erythrose 4-phosphate and phosphoenolpyruvate: step 6/7. Functionally, catalyzes the transfer of the enolpyruvyl moiety of phosphoenolpyruvate (PEP) to the 5-hydroxyl of shikimate-3-phosphate (S3P) to produce enolpyruvyl shikimate-3-phosphate and inorganic phosphate. This chain is 3-phosphoshikimate 1-carboxyvinyltransferase, found in Acidithiobacillus ferrooxidans (strain ATCC 23270 / DSM 14882 / CIP 104768 / NCIMB 8455) (Ferrobacillus ferrooxidans (strain ATCC 23270)).